The sequence spans 682 residues: Pesticidal crystal protein Cry19Ba (682 aa).

Belongs to the delta endotoxin family.

Functionally, promotes colloidosmotic lysis by binding to the midgut epithelial cells of mosquitos. Has larvicidal activity against Culex pipiens molestus, but not to Anopheles stephensi. The polypeptide is Pesticidal crystal protein Cry19Ba (Bacillus thuringiensis subsp. higo).